The sequence spans 414 residues: COUP transcription factor 2 (414 aa).

Residues Met-1–Gln-72 are disordered. Pro residues predominate over residues Pro-27–Pro-37. Positions His-38–Ala-57 are enriched in low complexity. At Thr-51 the chain carries Phosphothreonine. Over residues Gly-58–Gly-67 the composition is skewed to gly residues. Positions His-76 to Arg-151 form a DNA-binding region, nuclear receptor. 2 NR C4-type zinc fingers span residues Cys-79–Cys-99 and Cys-115–Cys-139. An interaction with ZFPM2 region spans residues Ala-117–Gln-414. The NR LBD domain maps to Tyr-177–Gly-403. Positions Leu-337–Gln-414 are important for dimerization.

It belongs to the nuclear hormone receptor family. NR2 subfamily. In terms of assembly, interacts with SQSTM1. Binds DNA as a dimer; homodimer or heterodimer with NR2F6. Interacts with NCOA1, NCOA2, NCOA3 and PPARGC1A. Interacts with ZFPM2. As to expression, ubiquitous. Expressed in the stromal cells of developing fetal ovaries.

The protein localises to the nucleus. Its function is as follows. Ligand-activated transcription factor. Activated by high concentrations of 9-cis-retinoic acid and all-trans-retinoic acid, but not by dexamethasone, cortisol or progesterone (in vitro). Regulation of the apolipoprotein A-I gene transcription. Binds to DNA site A. May be required to establish ovary identity during early gonad development. This Homo sapiens (Human) protein is COUP transcription factor 2 (NR2F2).